A 30-amino-acid chain; its full sequence is L-serine dehydratase, alpha chain (30 aa).

The protein belongs to the iron-sulfur dependent L-serine dehydratase family. Heterodimer of an alpha chain and a beta chain. [4Fe-4S] cluster serves as cofactor.

The catalysed reaction is L-serine = pyruvate + NH4(+). Its pathway is carbohydrate biosynthesis; gluconeogenesis. In Anaerotignum propionicum (Clostridium propionicum), this protein is L-serine dehydratase, alpha chain.